Consider the following 163-residue polypeptide: SsrA-binding protein (163 aa).

Residues 138 to 157 (EDRRGAIAERESKREMDRAL) show a composition bias toward basic and acidic residues. The segment at 138–163 (EDRRGAIAERESKREMDRALARGRRR) is disordered.

It belongs to the SmpB family.

The protein localises to the cytoplasm. Its function is as follows. Required for rescue of stalled ribosomes mediated by trans-translation. Binds to transfer-messenger RNA (tmRNA), required for stable association of tmRNA with ribosomes. tmRNA and SmpB together mimic tRNA shape, replacing the anticodon stem-loop with SmpB. tmRNA is encoded by the ssrA gene; the 2 termini fold to resemble tRNA(Ala) and it encodes a 'tag peptide', a short internal open reading frame. During trans-translation Ala-aminoacylated tmRNA acts like a tRNA, entering the A-site of stalled ribosomes, displacing the stalled mRNA. The ribosome then switches to translate the ORF on the tmRNA; the nascent peptide is terminated with the 'tag peptide' encoded by the tmRNA and targeted for degradation. The ribosome is freed to recommence translation, which seems to be the essential function of trans-translation. This is SsrA-binding protein from Anaeromyxobacter dehalogenans (strain 2CP-1 / ATCC BAA-258).